We begin with the raw amino-acid sequence, 303 residues long: HTH-type transcriptional regulator YjiE (303 aa).

An HTH lysR-type domain is found at 11 to 68 (IETKWLYDFLTLEKCRNFSQAAVSRNVSQPAFSRRIRALEQAIGVELFNRQVTPLQLS). The H-T-H motif DNA-binding region spans 28 to 47 (FSQAAVSRNVSQPAFSRRIR).

The protein belongs to the LysR transcriptional regulatory family. In terms of assembly, forms dimers, tetramers and possibly dodecameric complexes; oligomerization may be governed by cellular concentrations. DNA-binding seems to decrease oligomerization.

Its function is as follows. Protects cells from HOCl (hypochlorite) stress but not peroxide or diamide stress. Decreases the intracellular load of reactive oxygen species by up-regulating genes involved in methionine and cysteine biosynthesis and down-regulating Fur-regulated genes involved in iron acquisition. Has also been suggested to down-regulate expression of the flagellar regulon, decreasing motility, but this activity was not confirmed in a second study. The chain is HTH-type transcriptional regulator YjiE (yjiE) from Escherichia coli (strain K12).